A 462-amino-acid chain; its full sequence is L-seryl-tRNA(Sec) selenium transferase (462 aa).

K293 carries the N6-(pyridoxal phosphate)lysine modification.

It belongs to the SelA family. It depends on pyridoxal 5'-phosphate as a cofactor.

It is found in the cytoplasm. It catalyses the reaction L-seryl-tRNA(Sec) + selenophosphate + H(+) = L-selenocysteinyl-tRNA(Sec) + phosphate. Its pathway is aminoacyl-tRNA biosynthesis; selenocysteinyl-tRNA(Sec) biosynthesis; selenocysteinyl-tRNA(Sec) from L-seryl-tRNA(Sec) (bacterial route): step 1/1. Converts seryl-tRNA(Sec) to selenocysteinyl-tRNA(Sec) required for selenoprotein biosynthesis. The sequence is that of L-seryl-tRNA(Sec) selenium transferase from Clostridium botulinum (strain Okra / Type B1).